The following is a 212-amino-acid chain: Root-specific lectin (212 aa).

The signal sequence occupies residues 1–26; it reads MKMMSTRALALGAAAVLAFAAATAHA. Residue Gln27 is modified to Pyrrolidone carboxylic acid. Chitin-binding type-1 domains are found at residues 27-68, 69-111, 112-154, and 155-197; these read QRCG…ACYT, SKRC…PCRA, DIKC…ACST, and DKPC…GCDG. Disulfide bonds link Cys29/Cys44, Cys38/Cys50, Cys43/Cys57, Cys61/Cys66, Cys72/Cys87, Cys81/Cys93, Cys86/Cys100, Cys104/Cys109, Cys115/Cys130, Cys124/Cys136, Cys129/Cys143, Cys147/Cys152, Cys158/Cys173, Cys167/Cys179, Cys172/Cys186, and Cys190/Cys195. Substrate is bound at residue 36–38; that stretch reads MEC. 88–99 contributes to the substrate binding site; that stretch reads SQWGYCGFGAEY. 140–141 contributes to the substrate binding site; that stretch reads SE. N-linked (GlcNAc...) asparagine glycosylation occurs at Asn206.

In terms of tissue distribution, in roots.

Carbohydrate binding. The sequence is that of Root-specific lectin from Hordeum vulgare (Barley).